We begin with the raw amino-acid sequence, 204 residues long: Putative t-SNARE coiled-coil homology domain-containing protein L657 (204 aa).

T-SNARE coiled-coil homology domains are found at residues 9–71 (SDYY…MDHV) and 140–202 (DNSR…IKHT). Residues 159–181 (VLEKQANDISNILDEQNNTLEII) adopt a coiled-coil conformation.

The sequence is that of Putative t-SNARE coiled-coil homology domain-containing protein L657 from Acanthamoeba polyphaga (Amoeba).